Here is a 108-residue protein sequence, read N- to C-terminus: UPF0145 protein Tery_3795 (108 aa).

The protein belongs to the UPF0145 family.

The protein is UPF0145 protein Tery_3795 of Trichodesmium erythraeum (strain IMS101).